Reading from the N-terminus, the 289-residue chain is Inorganic pyrophosphatase (289 aa).

Ser2 is subject to N-acetylserine. At Lys57 the chain carries N6-acetyllysine. Positions 116, 121, and 153 each coordinate Mg(2+). The residue at position 228 (Lys228) is an N6-acetyllysine. At Ser250 the chain carries Phosphoserine.

It belongs to the PPase family. In terms of assembly, homodimer. It depends on Mg(2+) as a cofactor.

The protein localises to the cytoplasm. It catalyses the reaction diphosphate + H2O = 2 phosphate + H(+). The protein is Inorganic pyrophosphatase (Ppa1) of Mus musculus (Mouse).